A 499-amino-acid polypeptide reads, in one-letter code: Centrosomal protein of 57 kDa (499 aa).

The segment covering 1 to 16 (MAAASVSAASDSQFSS) has biased composition (low complexity). The disordered stretch occupies residues 1–41 (MAAASVSAASDSQFSSVLAEPSRSNGNMVHHSSSPYVLYPP). Residues 22-35 (SRSNGNMVHHSSSP) show a composition bias toward polar residues. A Phosphoserine modification is found at S53. The interval 58–239 (TFAYPESNSR…RAAELQSGIE (182 aa)) is centrosome localization domain (CLD). Residues 63-242 (ESNSRAIFSA…ELQSGIEANR (180 aa)) adopt a coiled-coil conformation. 2 disordered regions span residues 255–275 (TSTR…GFRN) and 424–476 (LEKQ…SRKN). The segment at 278 to 490 (GAQPHYRLCL…KDMQTLQNSL (213 aa)) is mediates interaction with microtubules. The stretch at 388–491 (PSEELKDNLE…DMQTLQNSLQ (104 aa)) forms a coiled coil. Over residues 427–443 (QSTDKQKELKGNKKTLD) the composition is skewed to basic and acidic residues. The span at 448–458 (SSSRSSVITRT) shows a compositional bias: low complexity. Residues 460–474 (SKKDFTKQRPGEKSR) show a composition bias toward basic and acidic residues.

Belongs to the translokin family. In terms of assembly, homodimer and homooligomer. Interacts with FGF2 and RAP80. Does not interact with FGF1 or FGF2 isoform 24 kDa. Interacts with microtubules. Ubiquitous (at protein level).

It localises to the nucleus. It is found in the cytoplasm. Its subcellular location is the cytoskeleton. The protein resides in the microtubule organizing center. The protein localises to the centrosome. Functionally, centrosomal protein which may be required for microtubule attachment to centrosomes. May act by forming ring-like structures around microtubules. Mediates nuclear translocation and mitogenic activity of the internalized growth factor FGF2. This Rattus norvegicus (Rat) protein is Centrosomal protein of 57 kDa (Cep57).